The primary structure comprises 533 residues: Trigger factor (533 aa).

In terms of domain architecture, PPIase FKBP-type spans Gly-164–Thr-249. A disordered region spans residues Glu-436–Lys-533. Basic residues predominate over residues Ala-465–Ala-477. Positions Ala-481 to Ala-490 are enriched in basic and acidic residues. 2 stretches are compositionally biased toward basic residues: residues Ala-494–Thr-506 and Pro-515–Lys-533.

This sequence belongs to the FKBP-type PPIase family. Tig subfamily.

The protein resides in the cytoplasm. The enzyme catalyses [protein]-peptidylproline (omega=180) = [protein]-peptidylproline (omega=0). Functionally, involved in protein export. Acts as a chaperone by maintaining the newly synthesized protein in an open conformation. Functions as a peptidyl-prolyl cis-trans isomerase. The polypeptide is Trigger factor (Erythrobacter litoralis (strain HTCC2594)).